The following is a 401-amino-acid chain: Tryptophan synthase beta chain (401 aa).

An N6-(pyridoxal phosphate)lysine modification is found at lysine 91.

The protein belongs to the TrpB family. As to quaternary structure, tetramer of two alpha and two beta chains. Pyridoxal 5'-phosphate is required as a cofactor.

It carries out the reaction (1S,2R)-1-C-(indol-3-yl)glycerol 3-phosphate + L-serine = D-glyceraldehyde 3-phosphate + L-tryptophan + H2O. Its pathway is amino-acid biosynthesis; L-tryptophan biosynthesis; L-tryptophan from chorismate: step 5/5. Functionally, the beta subunit is responsible for the synthesis of L-tryptophan from indole and L-serine. In Lactococcus lactis subsp. cremoris (strain SK11), this protein is Tryptophan synthase beta chain.